Consider the following 47-residue polypeptide: Putative heat shock protein HSP90 (47 aa).

Arginine 47 provides a ligand contact to ATP.

Belongs to the heat shock protein 90 family. In terms of assembly, homodimer.

The protein localises to the cytoplasm. Its function is as follows. Putative molecular chaperone that may promote the maturation, structural maintenance and proper regulation of specific target proteins. This chain is Putative heat shock protein HSP90, found in Populus euphratica (Euphrates poplar).